The primary structure comprises 218 residues: Serine/threonine-protein phosphatase 1 (218 aa).

Positions 24, 26, 53, and 79 each coordinate Mn(2+). The Proton donor role is filled by His80. Mn(2+) is bound at residue His187.

The protein belongs to the PPP phosphatase family. PP-1 subfamily. It depends on Mn(2+) as a cofactor.

The enzyme catalyses O-phospho-L-seryl-[protein] + H2O = L-seryl-[protein] + phosphate. It catalyses the reaction O-phospho-L-threonyl-[protein] + H2O = L-threonyl-[protein] + phosphate. In terms of biological role, plays a key role in signaling protein misfolding via the CpxR/CPXA transducing system. It also modulates the phosphorylated status of many phosphoproteins in E.coli, some of which acting as major chaperones. Has been shown, in vitro, to act on Ser, Thr and Tyr-phosphorylated substrates. This is Serine/threonine-protein phosphatase 1 (pphA) from Escherichia coli (strain K12).